The chain runs to 407 residues: uncharacterized protein (407 aa).

11 helical membrane passes run 13-30, 40-62, 67-89, 118-140, 147-169, 179-199, 253-271, 281-303, 334-356, 361-378, and 385-402; these read IVFTSFILYLLFFLSPFL, VTPLASIIGSGYLVSAPLLYYVL, ILGMAGIVILAYLIGGAIRYNII, LAFAYMISIAFYLRLLSSFVFSG, VYERLLTTGLLLFIGISGFIRRL, AVGLKLSIIFSFLTALLYYNY, WISGFIYVSFMFLITSVFV, TEIIFLASAVSLVLGYLLRFGPL, GYLITTLVGVALVWSANVFEIIA, AFAFYYLLQTIIAWLVSF, and QFLVFTLLIPVLIFIVLF.

The protein localises to the cell membrane. This is an uncharacterized protein from Aquifex aeolicus (strain VF5).